A 360-amino-acid polypeptide reads, in one-letter code: Protein Wnt-2 (360 aa).

Residues 1–25 form the signal peptide; it reads MNSPLRGIWLWLPLLLTWLTPEVSS. Disulfide bonds link Cys-76–Cys-87, Cys-127–Cys-135, Cys-137–Cys-157, Cys-206–Cys-220, Cys-208–Cys-215, Cys-278–Cys-309, Cys-294–Cys-304, Cys-308–Cys-348, Cys-324–Cys-339, Cys-326–Cys-336, and Cys-331–Cys-332. Ser-212 carries O-palmitoleoyl serine; by PORCN lipidation. Asn-295 is a glycosylation site (N-linked (GlcNAc...) asparagine).

The protein belongs to the Wnt family. In terms of processing, palmitoleoylation is required for efficient binding to frizzled receptors. Depalmitoleoylation leads to Wnt signaling pathway inhibition.

It localises to the secreted. It is found in the extracellular space. Its subcellular location is the extracellular matrix. Its function is as follows. Ligand for members of the frizzled family of seven transmembrane receptors. Probable developmental protein. May be a signaling molecule which affects the development of discrete regions of tissues. Is likely to signal over only few cell diameters. This chain is Protein Wnt-2 (WNT2), found in Ateles geoffroyi (Black-handed spider monkey).